The sequence spans 507 residues: Alkyl hydroperoxide reductase subunit F (507 aa).

An FAD-binding site is contributed by 207–222 (DVLIVGGGPASGSAAI). Cys-335 and Cys-338 are oxidised to a cystine. 347–361 (DVAVIGGGNSGVEAA) is an NAD(+) binding site. 467–477 (TNVPGIFAAGD) serves as a coordination point for FAD.

Belongs to the class-II pyridine nucleotide-disulfide oxidoreductase family. In terms of assembly, homodimer. Requires FAD as cofactor.

Serves to protect the cell against DNA damage by alkyl hydroperoxides. It can use either NADH or NADPH as electron donor for direct reduction of redox dyes or of alkyl hydroperoxides when combined with the AhpC protein. The chain is Alkyl hydroperoxide reductase subunit F (ahpF) from Staphylococcus aureus (strain MRSA252).